The following is a 171-amino-acid chain: Small ribosomal subunit protein mS41 (171 aa).

Residues 1–23 (MSLFKSLVARSGSGIRAAQIARQ) constitute a mitochondrion transit peptide. The disordered stretch occupies residues 122–141 (REHKKGKKKNGGERNAKTVL).

This sequence belongs to the mitochondrion-specific ribosomal protein mS41 family.

It is found in the mitochondrion. Functionally, involved in telomere length regulation. This Scheffersomyces stipitis (strain ATCC 58785 / CBS 6054 / NBRC 10063 / NRRL Y-11545) (Yeast) protein is Small ribosomal subunit protein mS41 (FYV4).